We begin with the raw amino-acid sequence, 173 residues long: Dual-action ribosomal maturation protein DarP (173 aa).

It belongs to the DarP family.

The protein resides in the cytoplasm. Member of a network of 50S ribosomal subunit biogenesis factors which assembles along the 30S-50S interface, preventing incorrect 23S rRNA structures from forming. Promotes peptidyl transferase center (PTC) maturation. This Pseudomonas putida (strain GB-1) protein is Dual-action ribosomal maturation protein DarP.